The following is a 2564-amino-acid chain: Histone-lysine N-methyltransferase SETD2 (2564 aa).

Over residues 1–11 (MKQLQPQPPPK) the composition is skewed to pro residues. The segment at 1–30 (MKQLQPQPPPKMGDFYDPEHPTPEEEENEA) is disordered. A compositionally biased stretch (basic and acidic residues) spans 17–30 (DPEHPTPEEEENEA). Residue serine 131 is modified to Phosphoserine. Disordered regions lie at residues 180-211 (STTVDSPPSSPPPPPPPAQATTLSSPAPVTEP), 272-561 (NEQA…TLSK), and 607-626 (PEREKAGSPAPSNRLNDSPT). Residues 187-197 (PSSPPPPPPPA) show a composition bias toward pro residues. The span at 198-207 (QATTLSSPAP) shows a compositional bias: low complexity. Residues 278–290 (SSKKEDSHIGKDE) are compositionally biased toward basic and acidic residues. A phosphoserine mark is found at serine 321, serine 323, and serine 344. Basic and acidic residues-rich tracts occupy residues 335–400 (RSHD…ERER), 421–432 (RSERSHYYDSDR), 439–467 (PYRERTRYSRPYTDNRARESSDSEEEYKK), and 479–528 (SYRD…EAIK). Lysine 359 participates in a covalent cross-link: Glycyl lysine isopeptide (Lys-Gly) (interchain with G-Cter in SUMO2). Serine 422 bears the Phosphoserine mark. Serine 532, serine 614, and serine 624 each carry phosphoserine. The segment covering 616–625 (APSNRLNDSP) has biased composition (polar residues). Position 626 is a phosphothreonine (threonine 626). Lysine 637 participates in a covalent cross-link: Glycyl lysine isopeptide (Lys-Gly) (interchain with G-Cter in SUMO2). Phosphoserine is present on residues serine 698, serine 708, serine 744, and serine 754. Residue lysine 776 forms a Glycyl lysine isopeptide (Lys-Gly) (interchain with G-Cter in SUMO2) linkage. Disordered stretches follow at residues 964–995 (EEGNSILPERRGRPEISLDERGEGGHVHTSDD), 1036–1101 (EDYS…SDHW), 1133–1233 (LHKG…LGKT), 1264–1352 (QEKP…FSDQ), and 1393–1443 (LEKN…PGSA). The segment covering 971 to 994 (PERRGRPEISLDERGEGGHVHTSD) has biased composition (basic and acidic residues). Acidic residues predominate over residues 1045–1058 (SNDESDSEDTDSDD). Residues 1084–1095 (SPCSSRSSQSYR) show a composition bias toward low complexity. The residue at position 1098 (serine 1098) is a Phosphoserine. Positions 1162–1171 (HPQSDGVDST) are enriched in polar residues. Residues 1172-1191 (SHTDVKSDPLGHPNSEETVK) are compositionally biased toward basic and acidic residues. The segment covering 1215–1225 (KSWQQTTFQNR) has biased composition (polar residues). Residue serine 1228 is modified to Phosphoserine. Positions 1265-1276 (EKPSTTYQQPDS) are enriched in polar residues. Over residues 1393 to 1403 (LEKNDIKDRGP) the composition is skewed to basic and acidic residues. Phosphoserine is present on residues serine 1413, serine 1415, and serine 1417. Positions 1418 to 1714 (DGELQDRKKV…KKERSRKKDS (297 aa)) are interaction with TUBA1A. Basic and acidic residues predominate over residues 1421-1431 (LQDRKKVRVEV). One can recognise an AWS domain in the interval 1494 to 1548 (IKRMQCECTPLSKDERAQGEIACGEDCLNRLLMIECSSRCPNGDYCSNRRFQRKQ). 7 residues coordinate Zn(2+): cysteine 1499, cysteine 1501, cysteine 1516, cysteine 1520, cysteine 1529, cysteine 1533, and cysteine 1539. Residues 1550-1667 (ADVEVILTEK…SGSELTFDYQ (118 aa)) enclose the SET domain. Residues 1560 to 1562 (KGW), 1603 to 1605 (HYY), and 1628 to 1629 (NH) contribute to the S-adenosyl-L-methionine site. Cysteine 1631 serves as a coordination point for Zn(2+). One can recognise a Post-SET domain in the interval 1674 to 1690 (EAQKCFCGSANCRGYLG). Residue glutamine 1676 coordinates S-adenosyl-L-methionine. A Zn(2+)-binding site is contributed by cysteine 1678. Position 1679 (phenylalanine 1679) interacts with S-adenosyl-L-methionine. Residues cysteine 1680 and cysteine 1685 each coordinate Zn(2+). Residues serine 1696, serine 1844, and serine 1845 each carry the phosphoserine modification. A disordered region spans residues 1831–1872 (KTAVPPLSEGDGYSSENTSRAHTPLNTPDPSTKLSTEADTDT). Over residues 1844–1867 (SSENTSRAHTPLNTPDPSTKLSTE) the composition is skewed to polar residues. Residues threonine 1853 and threonine 1872 each carry the phosphothreonine modification. Serine 1888 carries the post-translational modification Phosphoserine. Residues 1921 to 2142 (EELQSQQLLP…EAQKQQQQMQ (222 aa)) form a disordered region. Over residues 1924-1935 (QSQQLLPQQLPE) the composition is skewed to low complexity. Position 1952 is a phosphoserine (serine 1952). Over residues 1960 to 1972 (IEPKESNGTKLEE) the composition is skewed to basic and acidic residues. Residues 1973–1990 (PINEETPSQDEEEGVSDV) show a composition bias toward acidic residues. Phosphoserine occurs at positions 1980, 1988, and 1995. Basic and acidic residues-rich tracts occupy residues 1991-2004 (ESERSQEQPDKTVD), 2014-2046 (DSWKDLKEVYRIPKKSQTEKENTTTERGRDAVG), and 2059-2072 (RSRERDPDKQTQNK). Serine 2080 and serine 2082 each carry phosphoserine. Basic and acidic residues-rich tracts occupy residues 2090–2100 (RGTKRPDDRYD) and 2111–2135 (KDRNKLSTEERRKLFEQEVAQREAQ). Residues 2117-2146 (STEERRKLFEQEVAQREAQKQQQQMQNLGM) are a coiled coil. The tract at residues 2137–2366 (QQQQMQNLGM…APGQPQPLQP (230 aa)) is low charge region. Residues 2389-2422 (IVLPPNWKTARDPEGKIYYYHVITRQTQWDPPTW) enclose the WW domain. Residues 2439-2465 (LGTPTYDENPMKASKKPKTAEADTSSE) form a disordered region. The interval 2457–2564 (TAEADTSSEL…YKPKEDTELE (108 aa)) is interaction with POLR2A.

It belongs to the class V-like SAM-binding methyltransferase superfamily. Histone-lysine methyltransferase family. SET2 subfamily. In terms of assembly, specifically interacts with hyperphosphorylated C-terminal domain (CTD) of RNA polymerase II large subunit (POLR2A): binds to CTD heptad repeats doubly phosphorylated on 'Ser-2' and 'Ser-5' of each heptad. Interacts with HTT. Interacts with IWS1. Interacts with p53/TP53; leading to regulate p53/TP53 target genes. Component of a complex with HNRNPL. Interacts with TUBA1A; the interaction is independent on alpha-tubulin acetylation on 'Lys-40'. Interacts with STAT1. Post-translationally, may be automethylated. Ubiquitously expressed.

The protein resides in the nucleus. It localises to the chromosome. It catalyses the reaction L-lysyl(36)-[histone H3] + 3 S-adenosyl-L-methionine = N(6),N(6),N(6)-trimethyl-L-lysyl(36)-[histone H3] + 3 S-adenosyl-L-homocysteine + 3 H(+). It carries out the reaction L-lysyl-[protein] + S-adenosyl-L-methionine = N(6)-methyl-L-lysyl-[protein] + S-adenosyl-L-homocysteine + H(+). The catalysed reaction is L-lysyl-[protein] + 3 S-adenosyl-L-methionine = N(6),N(6),N(6)-trimethyl-L-lysyl-[protein] + 3 S-adenosyl-L-homocysteine + 3 H(+). Specifically inhibited by sinefungin derivatives. N-propyl sinefungin (Pr-SNF) interacts preferentially with SETD2. Its function is as follows. Histone methyltransferase that specifically trimethylates 'Lys-36' of histone H3 (H3K36me3) using dimethylated 'Lys-36' (H3K36me2) as substrate. It is capable of trimethylating unmethylated H3K36 (H3K36me0) in vitro. Represents the main enzyme generating H3K36me3, a specific tag for epigenetic transcriptional activation. Plays a role in chromatin structure modulation during elongation by coordinating recruitment of the FACT complex and by interacting with hyperphosphorylated POLR2A. Acts as a key regulator of DNA mismatch repair in G1 and early S phase by generating H3K36me3, a mark required to recruit MSH6 subunit of the MutS alpha complex: early recruitment of the MutS alpha complex to chromatin to be replicated allows a quick identification of mismatch DNA to initiate the mismatch repair reaction. Required for DNA double-strand break repair in response to DNA damage: acts by mediating formation of H3K36me3, promoting recruitment of RAD51 and DNA repair via homologous recombination (HR). Acts as a tumor suppressor. H3K36me3 also plays an essential role in the maintenance of a heterochromatic state, by recruiting DNA methyltransferase DNMT3A. H3K36me3 is also enhanced in intron-containing genes, suggesting that SETD2 recruitment is enhanced by splicing and that splicing is coupled to recruitment of elongating RNA polymerase. Required during angiogenesis. Required for endoderm development by promoting embryonic stem cell differentiation toward endoderm: acts by mediating formation of H3K36me3 in distal promoter regions of FGFR3, leading to regulate transcription initiation of FGFR3. In addition to histones, also mediates methylation of other proteins, such as tubulins and STAT1. Trimethylates 'Lys-40' of alpha-tubulins such as TUBA1B (alpha-TubK40me3); alpha-TubK40me3 is required for normal mitosis and cytokinesis and may be a specific tag in cytoskeletal remodeling. Involved in interferon-alpha-induced antiviral defense by mediating both monomethylation of STAT1 at 'Lys-525' and catalyzing H3K36me3 on promoters of some interferon-stimulated genes (ISGs) to activate gene transcription. In terms of biological role, (Microbial infection) Recruited to the promoters of adenovirus 12 E1A gene in case of infection, possibly leading to regulate its expression. The polypeptide is Histone-lysine N-methyltransferase SETD2 (SETD2) (Homo sapiens (Human)).